The chain runs to 466 residues: Reticulophagy regulator 3 (466 aa).

Residues 1 to 28 (MAEAEGVPTTPGPASGSTFRGRRDVSGS) form a disordered region. A2 is modified (N-acetylalanine). Residues 2–80 (AEAEGVPTTP…WCLGLNAAFW (79 aa)) lie on the Cytoplasmic side of the membrane. Position 10 is a phosphothreonine (T10). Residue S26 is modified to Phosphoserine. The chain crosses the membrane as a helical span at residues 81 to 101 (FFALTSLRLVFLLAFGLMIIV). Residues 102–163 (CIDQWKNKIW…FIRNVLLFKK (62 aa)) are Lumenal-facing. A helical transmembrane segment spans residues 164-184 (QNPGKFCLLSCGILTFLAVLG). The Cytoplasmic segment spans residues 185–186 (RY). Residues 187–207 (VPGLLLSYLMLVTVMMWPLAV) form a helical membrane-spanning segment. Residues 208–381 (YHRLWDRAYV…ASRDEAALPE (174 aa)) lie on the Lumenal side of the membrane. Residues S258 and S260 each carry the phosphoserine modification. Position 283 is a phosphothreonine (T283). The disordered stretch occupies residues 284-374 (DSEHSDAEVS…EEPQAPPASR (91 aa)). Phosphoserine occurs at positions 285, 288, 293, and 303. The span at 294–310 (CTDNGTFNLSRGQTPLT) shows a compositional bias: polar residues. A phosphothreonine mark is found at T307 and T310. A phosphoserine mark is found at S313, S320, and S360. The span at 316 to 331 (LDGHSDPEESFARDLP) shows a compositional bias: basic and acidic residues. A helical transmembrane segment spans residues 382-402 (LLLGALPVGSNLTSNLASLVS). Residues 403–466 (QGMIQLALSG…QLDPASSRSH (64 aa)) are Cytoplasmic-facing. Residues 412-466 (GASQPGPSGAPAQRATRGFLRSPSSDLDTDAEGDDFELLDQSELSQLDPASSRSH) are disordered. A compositionally biased stretch (acidic residues) spans 438-451 (LDTDAEGDDFELLD). Position 440 is a phosphothreonine (T440). The short motif at 445-450 (DDFELL) is the LIR motif element. The span at 453–466 (SELSQLDPASSRSH) shows a compositional bias: polar residues.

This sequence belongs to the RETREG family. Interacts with ATG8 family modifier proteins MAP1LC3A, MAP1LC3B, MAP1LC3C, GABARAP, GABARAPL1 and GABARAPL2. Interacts with CANX. Interacts with RTN4 isoform B.

Its subcellular location is the endoplasmic reticulum membrane. In terms of biological role, endoplasmic reticulum (ER)-anchored autophagy regulator which exists in an inactive state under basal conditions but is activated following cellular stress. When activated, induces ER fragmentation and mediates ER delivery into lysosomes through sequestration into autophagosomes via interaction with ATG8 family proteins. Promotes ER membrane curvature and ER tubulation required for subsequent ER fragmentation and engulfment into autophagosomes. Required for collagen quality control in a LIR motif-dependent manner. Mediates NRF1-enhanced neurite outgrowth. In Homo sapiens (Human), this protein is Reticulophagy regulator 3.